Consider the following 309-residue polypeptide: DNA replication terminus site-binding protein (309 aa).

This sequence belongs to the Tus family.

It localises to the cytoplasm. In terms of biological role, trans-acting protein required for termination of DNA replication. Binds to DNA replication terminator sequences (terA to terF) to prevent the passage of replication forks. The termination efficiency will be affected by the affinity of this protein for the terminator sequence. The chain is DNA replication terminus site-binding protein from Yersinia enterocolitica serotype O:8 / biotype 1B (strain NCTC 13174 / 8081).